The following is a 172-amino-acid chain: 3-hydroxydecanoyl-[acyl-carrier-protein] dehydratase (172 aa).

Histidine 71 is an active-site residue.

The protein belongs to the thioester dehydratase family. FabA subfamily. Homodimer.

The protein resides in the cytoplasm. It carries out the reaction a (3R)-hydroxyacyl-[ACP] = a (2E)-enoyl-[ACP] + H2O. It catalyses the reaction (3R)-hydroxydecanoyl-[ACP] = (2E)-decenoyl-[ACP] + H2O. The catalysed reaction is (2E)-decenoyl-[ACP] = (3Z)-decenoyl-[ACP]. The protein operates within lipid metabolism; fatty acid biosynthesis. Functionally, necessary for the introduction of cis unsaturation into fatty acids. Catalyzes the dehydration of (3R)-3-hydroxydecanoyl-ACP to E-(2)-decenoyl-ACP and then its isomerization to Z-(3)-decenoyl-ACP. Can catalyze the dehydratase reaction for beta-hydroxyacyl-ACPs with saturated chain lengths up to 16:0, being most active on intermediate chain length. The protein is 3-hydroxydecanoyl-[acyl-carrier-protein] dehydratase of Brucella anthropi (strain ATCC 49188 / DSM 6882 / CCUG 24695 / JCM 21032 / LMG 3331 / NBRC 15819 / NCTC 12168 / Alc 37) (Ochrobactrum anthropi).